The chain runs to 249 residues: tRNA 2'-phosphotransferase 1 (249 aa).

N-acetylmethionine is present on methionine 1. 2 disordered regions span residues 1–25 and 220–249; these read MNAP…RNVQ and KPLS…KIQQ.

It belongs to the KptA/TPT1 family.

The catalysed reaction is 2'-phospho-[ligated tRNA] + NAD(+) = mature tRNA + ADP-alpha-D-ribose 1'',2''-cyclic phosphate + nicotinamide. In terms of biological role, catalyzes the last step of tRNA splicing, the transfer of the splice junction 2'-phosphate from ligated tRNA to NAD to produce ADP-ribose 1''-2'' cyclic phosphate. The polypeptide is tRNA 2'-phosphotransferase 1 (Trpt1) (Mus musculus (Mouse)).